The following is an 89-amino-acid chain: Small ribosomal subunit protein uS17 (89 aa).

The protein belongs to the universal ribosomal protein uS17 family. Part of the 30S ribosomal subunit.

In terms of biological role, one of the primary rRNA binding proteins, it binds specifically to the 5'-end of 16S ribosomal RNA. The protein is Small ribosomal subunit protein uS17 of Paracidovorax citrulli (strain AAC00-1) (Acidovorax citrulli).